Here is a 93-residue protein sequence, read N- to C-terminus: Large ribosomal subunit protein uL23cz/uL23cy (93 aa).

This sequence belongs to the universal ribosomal protein uL23 family. As to quaternary structure, part of the 50S ribosomal subunit.

The protein localises to the plastid. Its subcellular location is the chloroplast. Binds to 23S rRNA. The polypeptide is Large ribosomal subunit protein uL23cz/uL23cy (rpl23-A) (Oryza nivara (Indian wild rice)).